A 139-amino-acid polypeptide reads, in one-letter code: S-adenosylmethionine decarboxylase proenzyme (139 aa).

S63 functions as the Schiff-base intermediate with substrate; via pyruvic acid in the catalytic mechanism. Pyruvic acid (Ser); by autocatalysis is present on S63. H68 acts as the Proton acceptor; for processing activity in catalysis. Catalysis depends on C83, which acts as the Proton donor; for catalytic activity.

The protein belongs to the prokaryotic AdoMetDC family. Type 1 subfamily. Heterotetramer of two alpha and two beta chains arranged as a dimer of alpha/beta heterodimers. Pyruvate is required as a cofactor. Post-translationally, is synthesized initially as an inactive proenzyme. Formation of the active enzyme involves a self-maturation process in which the active site pyruvoyl group is generated from an internal serine residue via an autocatalytic post-translational modification. Two non-identical subunits are generated from the proenzyme in this reaction, and the pyruvate is formed at the N-terminus of the alpha chain, which is derived from the carboxyl end of the proenzyme. The post-translation cleavage follows an unusual pathway, termed non-hydrolytic serinolysis, in which the side chain hydroxyl group of the serine supplies its oxygen atom to form the C-terminus of the beta chain, while the remainder of the serine residue undergoes an oxidative deamination to produce ammonia and the pyruvoyl group blocking the N-terminus of the alpha chain.

It catalyses the reaction S-adenosyl-L-methionine + H(+) = S-adenosyl 3-(methylsulfanyl)propylamine + CO2. It participates in amine and polyamine biosynthesis; S-adenosylmethioninamine biosynthesis; S-adenosylmethioninamine from S-adenosyl-L-methionine: step 1/1. In terms of biological role, catalyzes the decarboxylation of S-adenosylmethionine to S-adenosylmethioninamine (dcAdoMet), the propylamine donor required for the synthesis of the polyamines spermine and spermidine from the diamine putrescine. The chain is S-adenosylmethionine decarboxylase proenzyme from Pyrococcus abyssi (strain GE5 / Orsay).